The chain runs to 250 residues: Purine nucleoside phosphorylase BQ2027_MB2173C (250 aa).

Zn(2+) is bound by residues His77, Cys114, and His131.

It belongs to the purine nucleoside phosphorylase YfiH/LACC1 family. Homodimer. Requires Cu(2+) as cofactor. The cofactor is Zn(2+).

It catalyses the reaction adenosine + phosphate = alpha-D-ribose 1-phosphate + adenine. It carries out the reaction S-methyl-5'-thioadenosine + phosphate = 5-(methylsulfanyl)-alpha-D-ribose 1-phosphate + adenine. The catalysed reaction is inosine + phosphate = alpha-D-ribose 1-phosphate + hypoxanthine. The enzyme catalyses adenosine + H2O + H(+) = inosine + NH4(+). Its function is as follows. Purine nucleoside enzyme that catalyzes the phosphorolysis of adenosine and inosine nucleosides, yielding D-ribose 1-phosphate and the respective free bases, adenine and hypoxanthine. Also catalyzes the phosphorolysis of S-methyl-5'-thioadenosine into adenine and S-methyl-5-thio-alpha-D-ribose 1-phosphate. Also has adenosine deaminase activity. The chain is Purine nucleoside phosphorylase BQ2027_MB2173C from Mycobacterium bovis (strain ATCC BAA-935 / AF2122/97).